A 144-amino-acid polypeptide reads, in one-letter code: Sirohydrochlorin cobaltochelatase (144 aa).

The active-site Proton acceptor is His-9. His-9 is a binding site for Co(2+). His-9 is a binding site for Ni(2+). Residues Glu-45 and 70–75 (LAPGNH) each bind substrate. A Co(2+)-binding site is contributed by His-75. A Ni(2+)-binding site is contributed by His-75. A disordered region spans residues 89-112 (GDDEGGHHHHHDHEHHHHHHDTTA). Basic residues predominate over residues 95 to 108 (HHHHHDHEHHHHHH).

This sequence belongs to the CbiX family. CbiXS subfamily. As to quaternary structure, homotetramer; dimer of dimers.

The catalysed reaction is Co-sirohydrochlorin + 2 H(+) = sirohydrochlorin + Co(2+). It carries out the reaction Ni-sirohydrochlorin + 2 H(+) = sirohydrochlorin + Ni(2+). It participates in cofactor biosynthesis; adenosylcobalamin biosynthesis; cob(II)yrinate a,c-diamide from sirohydrochlorin (anaerobic route): step 1/10. In terms of biological role, catalyzes the insertion of Co(2+) into sirohydrochlorin as part of the anaerobic pathway to cobalamin biosynthesis. Involved in the biosynthesis of the unique nickel-containing tetrapyrrole coenzyme F430, the prosthetic group of methyl-coenzyme M reductase (MCR), which plays a key role in methanogenesis and anaerobic methane oxidation. Catalyzes the insertion of Ni(2+) into sirohydrochlorin to yield Ni-sirohydrochlorin. This chain is Sirohydrochlorin cobaltochelatase, found in Methanococcus maripaludis (strain DSM 14266 / JCM 13030 / NBRC 101832 / S2 / LL).